A 638-amino-acid polypeptide reads, in one-letter code: Pentatricopeptide repeat-containing protein At3g49730 (638 aa).

PPR repeat units lie at residues 130 to 164 (SYEVCKSMVMILSKMRQFGAVWGLIEEMRKTNPEL), 166 to 200 (EPELFVVLMRRFASANMVKKAVEVLDEMPKYGLEP), 201 to 231 (DEYVFGCLLDALCKNGSVKEASKVFEDMREK), 235 to 269 (NLRYFTSLLYGWCREGKLMEAKEVLVQMKEAGLEP), 270 to 304 (DIVVFTNLLSGYAHAGKMADAYDLMNDMRKRGFEP), 305 to 340 (NVNCYTVLIQALCRTEKRMDEAMRVFVEMERYGCEA), 341 to 375 (DIVTYTALISGFCKWGMIDKGYSVLDDMRKKGVMP), 376 to 410 (SQVTYMQIMVAHEKKEQFEECLELIEKMKRRGCHP), 411 to 445 (DLLIYNVVIRLACKLGEVKEAVRLWNEMEANGLSP), 446 to 480 (GVDTFVIMINGFTSQGFLIEACNHFKEMVSRGIFS), 483 to 513 (QYGTLKSLLNNLVRDDKLEMAKDVWSCISNK), and 520 to 554 (NVSAWTIWIHALYAKGHVKEACSYCLDMMEMDLMP). The tract at residues 604 to 638 (LIEKAKPKGNKEGKKKGTDHQRYKGRGERSRAKAL) is disordered.

Belongs to the PPR family. P subfamily.

The sequence is that of Pentatricopeptide repeat-containing protein At3g49730 from Arabidopsis thaliana (Mouse-ear cress).